A 208-amino-acid chain; its full sequence is Proheparin-binding EGF-like growth factor (208 aa).

A signal peptide spans 1–19; the sequence is MKLLPSVVLKLFLAAVLSA. The propeptide at 20-62 is or 72, or 73, or 76, or 81; sequence LVTGESLERLRRGLAAGTSNPDPPTVSTDQLLPLGGGRDRKVR. The Extracellular segment spans residues 20 to 160; sequence LVTGESLERL…ENRLYTYDHT (141 aa). The disordered stretch occupies residues 33 to 56; the sequence is LAAGTSNPDPPTVSTDQLLPLGGG. Residues 36–49 are compositionally biased toward polar residues; the sequence is GTSNPDPPTVSTDQ. An O-linked (GalNAc...) threonine glycan is attached at T37. Residue S38 is glycosylated (O-linked (GalNAc...) serine). 4 O-linked (GalNAc...) threonine glycosylation sites follow: T44, T47, T75, and T85. The tract at residues 82–104 is disordered; sequence ALATPNKEEHGKRKKKGKGLGKK. Over residues 93–102 the composition is skewed to basic residues; sequence KRKKKGKGLG. The 41-residue stretch at 104–144 folds into the EGF-like domain; that stretch reads KRDPCLRKYKDFCIHGECKYVKELRAPSCICHPGYHGERCH. 3 disulfide bridges follow: C108/C121, C116/C132, and C134/C143. A propeptide spans 149–208 (C-terminal); the sequence is PVENRLYTYDHTTILAVVAVVLSSVCLLVIVGLLMFRYHRRGGYDVENEEKVKLGMTNSH. A helical transmembrane segment spans residues 161–184; that stretch reads TILAVVAVVLSSVCLLVIVGLLMF. At 185-208 the chain is on the cytoplasmic side; that stretch reads RYHRRGGYDVENEEKVKLGMTNSH.

As to quaternary structure, interacts with FBLN1. Interacts with EGFR and ERBB4. In terms of processing, several N-termini have been identified by direct sequencing. The forms with N-termini 63, 73 and 74 have been tested and found to be biologically active. O-glycosylated with core 1 or possibly core 8 glycans. Thr-47 is a minor glycosylation site compared to Thr-44.

The protein resides in the secreted. Its subcellular location is the extracellular space. It is found in the cell membrane. Functionally, growth factor that mediates its effects via EGFR, ERBB2 and ERBB4. Required for normal cardiac valve formation and normal heart function. Promotes smooth muscle cell proliferation. May be involved in macrophage-mediated cellular proliferation. It is mitogenic for fibroblasts, but not endothelial cells. It is able to bind EGF receptor/EGFR with higher affinity than EGF itself and is a far more potent mitogen for smooth muscle cells than EGF. Also acts as a diphtheria toxin receptor. The protein is Proheparin-binding EGF-like growth factor (HBEGF) of Homo sapiens (Human).